Reading from the N-terminus, the 257-residue chain is Adenylate kinase (257 aa).

Glycine 52–threonine 57 contacts ATP. Residues alanine 72–valine 101 are NMP. AMP contacts are provided by residues threonine 73, arginine 78, glycine 99–valine 101, glycine 128–arginine 131, and glutamine 135. The LID stretch occupies residues glycine 169–aspartate 206. ATP contacts are provided by residues arginine 170 and serine 179 to tyrosine 180. The AMP site is built by arginine 203 and arginine 214. An ATP-binding site is contributed by glutamine 242.

The protein belongs to the adenylate kinase family. AK2 subfamily. Monomer.

The protein localises to the cytoplasm. It localises to the cytosol. Its subcellular location is the mitochondrion intermembrane space. It catalyses the reaction AMP + ATP = 2 ADP. Its function is as follows. Catalyzes the reversible transfer of the terminal phosphate group between ATP and AMP. Plays an important role in cellular energy homeostasis and in adenine nucleotide metabolism. Adenylate kinase activity is critical for regulation of the phosphate utilization and the AMP de novo biosynthesis pathways. The polypeptide is Adenylate kinase (adk1) (Aspergillus fumigatus (strain CBS 144.89 / FGSC A1163 / CEA10) (Neosartorya fumigata)).